The primary structure comprises 502 residues: MAKEEKNLHVLEENFNQLIRERIQKFKNLQEQNKDPFEVYKVERTHTSKEIKDNYETLDGTDVTVAGRLMSKRVHGKAGFSDLYDRYGKIQLYIKINDVGEEKLKEYKSYDIGDILSVSGKVFKTRTGEVSIHITDFQLAAKSLKPLPEKWHGLKDPDLRYRQRYVDLIINQDVRDTFLKRTAVIRAIREFLDGRDYIEVETPILSSIAGGAAAKPFITHHNALDIDMYLRIATELYLKRLIVGGFEKVYEIGKNFRNEGIDVRHNPEFTAMELYEAFSDYNDMMELTENMLAYVCEKVLGTTKVIYQDTEIDFKPPWNRITMVDAVKQFTKVDFNEVESDDEARKIAVEKNIELKKELKDCTKGDILVGMFEEFCEHKFIQPTFVMDYPVEISPLTKKKRGNDKYTERFEGFIFGREVCNAYSELNDPIVQRERFMQQIRERELGDDEAYMMDEDFINALEIGMPPTGGLGIGLDRIIMFLTNSYSIRDVILFPTMKPSQQ.

Positions 411 and 418 each coordinate Mg(2+).

It belongs to the class-II aminoacyl-tRNA synthetase family. Homodimer. The cofactor is Mg(2+).

The protein resides in the cytoplasm. The catalysed reaction is tRNA(Lys) + L-lysine + ATP = L-lysyl-tRNA(Lys) + AMP + diphosphate. The chain is Lysine--tRNA ligase from Clostridium kluyveri (strain ATCC 8527 / DSM 555 / NBRC 12016 / NCIMB 10680 / K1).